Consider the following 142-residue polypeptide: Putative FK506-binding protein 9-like protein (142 aa).

Residues 1 to 49 form the PPIase FKBP-type domain; it reads MDMGLREMCVGEKRTVIIPPHLGYGEAGVDGEVPGSAVLVFDIELLELV. 2 consecutive EF-hand domains span residues 60 to 95 and 105 to 140; these read WNGE…QVAS and DAEL…AKQD. Ca(2+) is bound by residues Asp118, Asn120, Asp122, Lys124, and Glu129.

The polypeptide is Putative FK506-binding protein 9-like protein (FKBP9P1) (Homo sapiens (Human)).